Here is a 160-residue protein sequence, read N- to C-terminus: MAKSGKRLEELVEELAAPHAAALGLELVGVELVKEGAYRYLRVYIDKEGGVGFDDCEALSRVVDAQLDEILPNPPYDFFEVSSPGLDRPLKREADFARYVGHKVVVTTYAPVDGQKSFVGELQGLVDGRVTLTLTEGKGRGQTIALDRKQVASARLYVEF.

This sequence belongs to the RimP family.

It localises to the cytoplasm. Its function is as follows. Required for maturation of 30S ribosomal subunits. This is Ribosome maturation factor RimP from Symbiobacterium thermophilum (strain DSM 24528 / JCM 14929 / IAM 14863 / T).